The following is a 494-amino-acid chain: Ketol-acid reductoisomerase (NADP(+)) (494 aa).

In terms of domain architecture, KARI N-terminal Rossmann spans 14–208 (LDQLGRCRFM…GGHRAGCLAS (195 aa)). Residues 45–48 (CGAQ), Arg68, Arg76, Ser78, and 108–110 (DKQ) each bind NADP(+). His132 is an active-site residue. Gly158 contributes to the NADP(+) binding site. KARI C-terminal knotted domains follow at residues 209 to 344 (SFVA…NYPT) and 345 to 487 (TDVK…MKDM). Mg(2+) contacts are provided by Asp217, Glu221, Glu389, and Glu393. Residue Ser414 participates in substrate binding.

The protein belongs to the ketol-acid reductoisomerase family. Mg(2+) is required as a cofactor.

The enzyme catalyses (2R)-2,3-dihydroxy-3-methylbutanoate + NADP(+) = (2S)-2-acetolactate + NADPH + H(+). It carries out the reaction (2R,3R)-2,3-dihydroxy-3-methylpentanoate + NADP(+) = (S)-2-ethyl-2-hydroxy-3-oxobutanoate + NADPH + H(+). It participates in amino-acid biosynthesis; L-isoleucine biosynthesis; L-isoleucine from 2-oxobutanoate: step 2/4. It functions in the pathway amino-acid biosynthesis; L-valine biosynthesis; L-valine from pyruvate: step 2/4. Its function is as follows. Involved in the biosynthesis of branched-chain amino acids (BCAA). Catalyzes an alkyl-migration followed by a ketol-acid reduction of (S)-2-acetolactate (S2AL) to yield (R)-2,3-dihydroxy-isovalerate. In the isomerase reaction, S2AL is rearranged via a Mg-dependent methyl migration to produce 3-hydroxy-3-methyl-2-ketobutyrate (HMKB). In the reductase reaction, this 2-ketoacid undergoes a metal-dependent reduction by NADPH to yield (R)-2,3-dihydroxy-isovalerate. The sequence is that of Ketol-acid reductoisomerase (NADP(+)) from Vibrio cholerae serotype O1 (strain ATCC 39541 / Classical Ogawa 395 / O395).